A 224-amino-acid polypeptide reads, in one-letter code: Deoxyribose-phosphate aldolase (224 aa).

Residue aspartate 92 is the Proton donor/acceptor of the active site. The Schiff-base intermediate with acetaldehyde role is filled by lysine 155. The active-site Proton donor/acceptor is the lysine 184.

Belongs to the DeoC/FbaB aldolase family. DeoC type 1 subfamily.

The protein localises to the cytoplasm. The catalysed reaction is 2-deoxy-D-ribose 5-phosphate = D-glyceraldehyde 3-phosphate + acetaldehyde. It functions in the pathway carbohydrate degradation; 2-deoxy-D-ribose 1-phosphate degradation; D-glyceraldehyde 3-phosphate and acetaldehyde from 2-deoxy-alpha-D-ribose 1-phosphate: step 2/2. Functionally, catalyzes a reversible aldol reaction between acetaldehyde and D-glyceraldehyde 3-phosphate to generate 2-deoxy-D-ribose 5-phosphate. The sequence is that of Deoxyribose-phosphate aldolase from Halalkalibacterium halodurans (strain ATCC BAA-125 / DSM 18197 / FERM 7344 / JCM 9153 / C-125) (Bacillus halodurans).